The primary structure comprises 429 residues: Carbamoyl phosphate synthase arginine-specific small chain (429 aa).

The transit peptide at 1-20 (MIRVIQPPLIASKQLFRRYL) directs the protein to the mitochondrion. The region spanning 218–406 (HIAVLDCGAK…FENIEQYRAT (189 aa)) is the Glutamine amidotransferase type-1 domain. Residue Cys295 is the Nucleophile of the active site. Residues His379 and Glu381 contribute to the active site.

Belongs to the CarA family. Heterodimer composed of 2 chains; the small (or glutamine) chain promotes the hydrolysis of glutamine to ammonia, which is used by the large (or ammonia) chain to synthesize carbamoyl phosphate.

Its subcellular location is the mitochondrion matrix. The enzyme catalyses hydrogencarbonate + L-glutamine + 2 ATP + H2O = carbamoyl phosphate + L-glutamate + 2 ADP + phosphate + 2 H(+). The catalysed reaction is L-glutamine + H2O = L-glutamate + NH4(+). Its pathway is amino-acid biosynthesis; L-arginine biosynthesis; carbamoyl phosphate from bicarbonate: step 1/1. In terms of biological role, small subunit of the arginine-specific carbamoyl phosphate synthase (CPSase). CPSase catalyzes the formation of carbamoyl phosphate from the ammonia moiety of glutamine, carbonate, and phosphate donated by ATP, the first step of the arginine biosynthetic pathway. The small subunit (glutamine amidotransferase) binds and cleaves glutamine to supply the large subunit with the substrate ammonia. This chain is Carbamoyl phosphate synthase arginine-specific small chain (CPA1), found in Debaryomyces hansenii (strain ATCC 36239 / CBS 767 / BCRC 21394 / JCM 1990 / NBRC 0083 / IGC 2968) (Yeast).